Reading from the N-terminus, the 348-residue chain is Rhodopsin (348 aa).

The residue at position 1 (M1) is an N-acetylmethionine. Over 1-36 the chain is Extracellular; it reads MNGTEGPNFYVPFSNKTGVVRSPFEYPQYYLAEPWQ. 2 N-linked (GlcNAc...) asparagine glycosylation sites follow: N2 and N15. Residues 37–61 traverse the membrane as a helical segment; the sequence is FSMLAAYMFLLIVLGFPINFLTLYV. Topologically, residues 62-73 are cytoplasmic; it reads TVQHKKLRTPLN. Residues 74–96 form a helical membrane-spanning segment; that stretch reads YILLNLAVADLFMVFGGFTTTLY. Over 97–110 the chain is Extracellular; that stretch reads TSLHGYFVFGPTGC. Residues C110 and C187 are joined by a disulfide bond. A helical transmembrane segment spans residues 111-133; the sequence is NVEGFFATLGGEIALWSLVVLAI. The short motif at 134 to 136 is the 'Ionic lock' involved in activated form stabilization element; the sequence is ERY. The Cytoplasmic segment spans residues 134-152; it reads ERYVVVCKPMSNFRFGENH. The chain crosses the membrane as a helical span at residues 153 to 173; sequence AIMGVAFTWVMALACAAPPLA. The Extracellular portion of the chain corresponds to 174 to 202; it reads GWSRYIPEGMQCSCGIDYYTLKPEVNNES. Residue E201 coordinates Zn(2+). The chain crosses the membrane as a helical span at residues 203–224; that stretch reads FVIYMFVVHFTIPMIVIFFCYG. Residues 225–252 are Cytoplasmic-facing; it reads QLVFTVKEAAAQQQESATTQKAEKEVTR. Residues 253-274 traverse the membrane as a helical segment; that stretch reads MVIIMVIAFLICWVPYASVAFY. Residues 275–286 are Extracellular-facing; that stretch reads IFTHQGSNFGPI. A Zn(2+)-binding site is contributed by Q279. A helical transmembrane segment spans residues 287 to 308; it reads FMTLPAFFAKSASIYNPVIYIM. K296 is modified (N6-(retinylidene)lysine). Topologically, residues 309-348 are cytoplasmic; it reads MNKQFRNCMLTTICCGKNPFAEEEGATTVSKTETSQVAPA. 2 S-palmitoyl cysteine lipidation sites follow: C322 and C323. An interaction with SAG region spans residues 330–348; sequence EEEGATTVSKTETSQVAPA. A phosphothreonine mark is found at T335 and T336. The residue at position 338 (S338) is a Phosphoserine. T340 and T342 each carry phosphothreonine. S343 bears the Phosphoserine mark.

It belongs to the G-protein coupled receptor 1 family. Opsin subfamily. In terms of assembly, homodimer. May form a complex composed of RHO, GRK1 and RCVRN in a Ca(2+)-dependent manner; RCVRN prevents the interaction between GRK1 and RHO. Interacts with GRK1. Interacts (phosphorylated form) with SAG. Interacts with GNAT1. Interacts with GNAT3. SAG and G-proteins compete for a common binding site. Interacts with PRCD; the interaction promotes PRCD stability. Forms a complex with ASAP1 and ARF4. Forms a complex with ASAP1, RAB11A, Rabin8/RAB3IP, ARF4 and RAB11FIP3; the complex regulates Golgi-to-cilia rhodopsin/RHO transport in photoreceptors. In terms of processing, phosphorylated on some or all of the serine and threonine residues present in the C-terminal region. Contains one covalently linked retinal chromophore. Upon light absorption, the covalently bound 11-cis-retinal is converted to all-trans-retinal. After hydrolysis of the Schiff base and release of the covalently bound all-trans-retinal, active rhodopsin is regenerated by binding of a fresh molecule of 11-cis-retinal.

It localises to the membrane. Its subcellular location is the cell projection. The protein resides in the cilium. It is found in the photoreceptor outer segment. Functionally, photoreceptor required for image-forming vision at low light intensity. Required for photoreceptor cell viability after birth. Light-induced isomerization of 11-cis to all-trans retinal triggers a conformational change that activates signaling via G-proteins. Subsequent receptor phosphorylation mediates displacement of the bound G-protein alpha subunit by the arrestin SAG and terminates signaling. This chain is Rhodopsin (RHO), found in Trichechus manatus (Caribbean manatee).